The primary structure comprises 231 residues: Large ribosomal subunit protein uL1 (231 aa).

The protein belongs to the universal ribosomal protein uL1 family. Part of the 50S ribosomal subunit.

Its function is as follows. Binds directly to 23S rRNA. The L1 stalk is quite mobile in the ribosome, and is involved in E site tRNA release. Protein L1 is also a translational repressor protein, it controls the translation of the L11 operon by binding to its mRNA. This Nitrosococcus oceani (strain ATCC 19707 / BCRC 17464 / JCM 30415 / NCIMB 11848 / C-107) protein is Large ribosomal subunit protein uL1.